A 341-amino-acid polypeptide reads, in one-letter code: HTH-type transcriptional repressor PurR (341 aa).

Positions 2–56 constitute an HTH lacI-type domain; it reads ATIKDVAKRAGVSTTTVSHVINKTRFVADETKAAVWEAIKELHYSPSAVARSLKV. The segment at residues 4–23 is a DNA-binding region (H-T-H motif); sequence IKDVAKRAGVSTTTVSHVIN. The DNA-binding element occupies 48–56; that stretch reads SAVARSLKV. Positions 73, 190, 192, 221, and 275 each coordinate hypoxanthine.

As to quaternary structure, homodimer.

It functions in the pathway purine metabolism; purine nucleotide biosynthesis [regulation]. Is the main repressor of the genes involved in the de novo synthesis of purine nucleotides, regulating purB, purC, purEK, purF, purHD, purL, purMN and guaBA expression. PurR is allosterically activated to bind its cognate DNA by binding the purine corepressors, hypoxanthine or guanine, thereby effecting transcription repression. The polypeptide is HTH-type transcriptional repressor PurR (Edwardsiella ictaluri (strain 93-146)).